Consider the following 265-residue polypeptide: Putative hydro-lyase PA14_37210 (265 aa).

The protein belongs to the D-glutamate cyclase family.

The chain is Putative hydro-lyase PA14_37210 from Pseudomonas aeruginosa (strain UCBPP-PA14).